A 51-amino-acid chain; its full sequence is Insulin (51 aa).

3 disulfide bridges follow: C7–C37, C19–C50, and C36–C41.

This sequence belongs to the insulin family. Heterodimer of a B chain and an A chain linked by two disulfide bonds.

The protein localises to the secreted. Insulin decreases blood glucose concentration. It increases cell permeability to monosaccharides, amino acids and fatty acids. It accelerates glycolysis, the pentose phosphate cycle, and glycogen synthesis in liver. This Hystrix cristata (North African crested porcupine) protein is Insulin (INS).